Here is a 44-residue protein sequence, read N- to C-terminus: Photosystem I reaction center subunit IX (44 aa).

A helical membrane pass occupies residues 7–27; the sequence is YLSVAPVLATLWFGSLAGLLI.

It belongs to the PsaJ family.

It is found in the plastid. The protein localises to the chloroplast thylakoid membrane. Functionally, may help in the organization of the PsaE and PsaF subunits. In Piper cenocladum (Ant piper), this protein is Photosystem I reaction center subunit IX.